The chain runs to 562 residues: Potassium-transporting ATPase potassium-binding subunit (562 aa).

12 helical membrane passes run 6–26 (FLLIASFMLVLLVLARPLGSF), 63–83 (ALAILLFNILGIALLFALLMM), 132–152 (GLTVQNFLSAATGIAVAFALI), 175–195 (LYVLLPIALIIALIFVSQGVL), 253–273 (FVQMLAIFLIPCALCFAFGQV), 283–303 (LIWAMSLIFVVAVVVVMYAEL), 327–347 (FGILATSMYAVVTTAASCGAV), 356–376 (ALGGMVPMWLMQIGEVVFGGV), 379–399 (GLYGMLLFVLLTVFIAGLMIG), 416–436 (MTALAILVTPAVVLLGTALAL), 483–503 (LLLAAAMFLGRFGVILPVLAI), and 526–546 (LFIGLLVGTVLLVGALTFIPA).

This sequence belongs to the KdpA family. As to quaternary structure, the system is composed of three essential subunits: KdpA, KdpB and KdpC.

It localises to the cell inner membrane. In terms of biological role, part of the high-affinity ATP-driven potassium transport (or Kdp) system, which catalyzes the hydrolysis of ATP coupled with the electrogenic transport of potassium into the cytoplasm. This subunit binds the periplasmic potassium ions and delivers the ions to the membrane domain of KdpB through an intramembrane tunnel. The chain is Potassium-transporting ATPase potassium-binding subunit from Yersinia enterocolitica serotype O:8 / biotype 1B (strain NCTC 13174 / 8081).